The sequence spans 465 residues: MAKKAPDVGDYKYGFHDDDVSIFRSERGLTENIVREISNMKNEPEWMLDFRLKSLKLFYKMPMPQWGGDLSELNFDDITYYVKPSEQAERSWDEVPEEIKRTFDKLGIPEAEQKYLAGVSAQYESEVVYHNMEKELEEKGIIFKDTDSALQENEELFKKYFASVVPAADNKFAALNSAVWSGGSFIYVPKNIKLDTPLQAYFRINSENMGQFERTLIIADEGASVHYIEGCTAPVYTTSSLHSAVVEIIVHKDAHVRYTTIQNWANNVYNLVTKRTFVYENGNMEWVDGNLGSKLTMKYPNCVLLGEGAKGSTLSIAFAGKGQVQDAGAKMIHKAPNTSSTIVSKSISKNGGKVIYRGIVHFGRKAKGARSNIECDTLILDNESTSDTIPYNEVFNDQISLEHEAKVSKVSEEQLFYLMSRGISEEEATEMIVMGFIEPFTKELPMEYAVEMNRLIKFEMEGSIG.

Belongs to the iron-sulfur cluster assembly SufBD family.

The sequence is that of Iron-sulfur cluster assembly SufBD family protein SAR0880 from Staphylococcus aureus (strain MRSA252).